The following is a 137-amino-acid chain: Large ribosomal subunit protein uL16 (137 aa).

Basic residues predominate over residues 1–16 (MLQPKRTKFRKVHTGR). A disordered region spans residues 1-22 (MLQPKRTKFRKVHTGRNRGLAQ).

It belongs to the universal ribosomal protein uL16 family. As to quaternary structure, part of the 50S ribosomal subunit.

Binds 23S rRNA and is also seen to make contacts with the A and possibly P site tRNAs. This Idiomarina loihiensis (strain ATCC BAA-735 / DSM 15497 / L2-TR) protein is Large ribosomal subunit protein uL16.